The primary structure comprises 107 residues: Keratin, type I cytoskeletal 20 (107 aa).

The head stretch occupies residues 1-7 (GNLWVGN). Positions 8–43 (EKMTMKNLNDRLASYLEKVRSLEQSNSKFELQIKQW) are coil 1A. The region spanning 8-107 (EKMTMKNLND…ETERGIRLAV (100 aa)) is the IF rod domain. The tract at residues 44–61 (YESNTPGISRDHSAYLQQ) is linker 1. The tract at residues 62 to 107 (IQDLRNQIRDAQLQNARCVLQIDNAKLAAEDFRLKYETERGIRLAV) is coil 1B.

The protein belongs to the intermediate filament family. In terms of assembly, heterotetramer of two type I and two type II keratins. Associates with KRT8.

In terms of biological role, plays a significant role in maintaining keratin filament organization in intestinal epithelia. When phosphorylated, plays a role in the secretion of mucin in the small intestine. This Sus scrofa (Pig) protein is Keratin, type I cytoskeletal 20.